Here is a 147-residue protein sequence, read N- to C-terminus: D-aminoacyl-tRNA deacylase (147 aa).

Residues 136 to 137 (GP) carry the Gly-cisPro motif, important for rejection of L-amino acids motif.

This sequence belongs to the DTD family. Homodimer.

The protein localises to the cytoplasm. The enzyme catalyses glycyl-tRNA(Ala) + H2O = tRNA(Ala) + glycine + H(+). It carries out the reaction a D-aminoacyl-tRNA + H2O = a tRNA + a D-alpha-amino acid + H(+). Functionally, an aminoacyl-tRNA editing enzyme that deacylates mischarged D-aminoacyl-tRNAs. Also deacylates mischarged glycyl-tRNA(Ala), protecting cells against glycine mischarging by AlaRS. Acts via tRNA-based rather than protein-based catalysis; rejects L-amino acids rather than detecting D-amino acids in the active site. By recycling D-aminoacyl-tRNA to D-amino acids and free tRNA molecules, this enzyme counteracts the toxicity associated with the formation of D-aminoacyl-tRNA entities in vivo and helps enforce protein L-homochirality. The chain is D-aminoacyl-tRNA deacylase from Streptococcus pyogenes serotype M1.